The following is a 93-amino-acid chain: Small ribosomal subunit protein bS18 (93 aa).

It belongs to the bacterial ribosomal protein bS18 family. As to quaternary structure, part of the 30S ribosomal subunit. Forms a tight heterodimer with protein bS6.

Its function is as follows. Binds as a heterodimer with protein bS6 to the central domain of the 16S rRNA, where it helps stabilize the platform of the 30S subunit. The sequence is that of Small ribosomal subunit protein bS18 from Verminephrobacter eiseniae (strain EF01-2).